We begin with the raw amino-acid sequence, 556 residues long: 2-succinyl-5-enolpyruvyl-6-hydroxy-3-cyclohexene-1-carboxylate synthase (556 aa).

This sequence belongs to the TPP enzyme family. MenD subfamily. Homodimer. It depends on Mg(2+) as a cofactor. The cofactor is Mn(2+). Thiamine diphosphate serves as cofactor.

The catalysed reaction is isochorismate + 2-oxoglutarate + H(+) = 5-enolpyruvoyl-6-hydroxy-2-succinyl-cyclohex-3-ene-1-carboxylate + CO2. Its pathway is quinol/quinone metabolism; 1,4-dihydroxy-2-naphthoate biosynthesis; 1,4-dihydroxy-2-naphthoate from chorismate: step 2/7. The protein operates within quinol/quinone metabolism; menaquinone biosynthesis. Catalyzes the thiamine diphosphate-dependent decarboxylation of 2-oxoglutarate and the subsequent addition of the resulting succinic semialdehyde-thiamine pyrophosphate anion to isochorismate to yield 2-succinyl-5-enolpyruvyl-6-hydroxy-3-cyclohexene-1-carboxylate (SEPHCHC). The polypeptide is 2-succinyl-5-enolpyruvyl-6-hydroxy-3-cyclohexene-1-carboxylate synthase (Escherichia coli O127:H6 (strain E2348/69 / EPEC)).